Reading from the N-terminus, the 355-residue chain is uncharacterized protein (355 aa).

It is found in the cytoplasm. This is an uncharacterized protein from Saccharomyces cerevisiae (strain ATCC 204508 / S288c) (Baker's yeast).